We begin with the raw amino-acid sequence, 481 residues long: 6-phosphogluconate dehydrogenase, decarboxylating (481 aa).

Residues 11–16 (GLAVMG), 34–36 (NRT), 76–78 (VKA), and Asn104 each bind NADP(+). Substrate-binding positions include Asn104 and 130-132 (SGG). Lys184 acts as the Proton acceptor in catalysis. 187–188 (HN) is a binding site for substrate. Glu191 serves as the catalytic Proton donor. Positions 192, 259, 286, 445, and 451 each coordinate substrate.

This sequence belongs to the 6-phosphogluconate dehydrogenase family. In terms of assembly, homodimer.

It catalyses the reaction 6-phospho-D-gluconate + NADP(+) = D-ribulose 5-phosphate + CO2 + NADPH. Its pathway is carbohydrate degradation; pentose phosphate pathway; D-ribulose 5-phosphate from D-glucose 6-phosphate (oxidative stage): step 3/3. In terms of biological role, catalyzes the oxidative decarboxylation of 6-phosphogluconate to ribulose 5-phosphate and CO(2), with concomitant reduction of NADP to NADPH. This is 6-phosphogluconate dehydrogenase, decarboxylating (Pgd) from Drosophila melanogaster (Fruit fly).